The primary structure comprises 361 residues: Protein RecA (361 aa).

Glycine 77–threonine 84 serves as a coordination point for ATP.

Belongs to the RecA family.

Its subcellular location is the cytoplasm. Functionally, can catalyze the hydrolysis of ATP in the presence of single-stranded DNA, the ATP-dependent uptake of single-stranded DNA by duplex DNA, and the ATP-dependent hybridization of homologous single-stranded DNAs. It interacts with LexA causing its activation and leading to its autocatalytic cleavage. This is Protein RecA from Brucella suis (strain ATCC 23445 / NCTC 10510).